The sequence spans 130 residues: Small ribosomal subunit protein uS9 (130 aa).

Belongs to the universal ribosomal protein uS9 family.

This chain is Small ribosomal subunit protein uS9, found in Pseudomonas fluorescens (strain Pf0-1).